The sequence spans 350 residues: Transmembrane protein 185A (350 aa).

The next 7 helical transmembrane spans lie at 16-36, 41-61, 81-101, 111-131, 177-197, 211-231, and 240-260; these read LIYA…DGII, WAVF…ASVG, FKAM…EVLV, FWLL…AACV, ILMS…VLFL, ITMA…EILL, and AFSC…LMAT. The interval 298 to 350 is mediates interaction with MAP1B; the sequence is DLHHEDNEETEETPVPEPPKIAPMFRKKARVVITQSPGKYVLPPPKLNIEMPD.

The protein belongs to the TMEM185 family. Interacts with MAP1B.

It is found in the cell projection. It localises to the dendrite. Its subcellular location is the membrane. This Homo sapiens (Human) protein is Transmembrane protein 185A (TMEM185A).